Reading from the N-terminus, the 140-residue chain is Ribonuclease P protein component (140 aa).

A disordered region spans residues 33–54 (RALKPSSAKKSSLDTAAKTQPA).

It belongs to the RnpA family. As to quaternary structure, consists of a catalytic RNA component (M1 or rnpB) and a protein subunit.

It catalyses the reaction Endonucleolytic cleavage of RNA, removing 5'-extranucleotides from tRNA precursor.. In terms of biological role, RNaseP catalyzes the removal of the 5'-leader sequence from pre-tRNA to produce the mature 5'-terminus. It can also cleave other RNA substrates such as 4.5S RNA. The protein component plays an auxiliary but essential role in vivo by binding to the 5'-leader sequence and broadening the substrate specificity of the ribozyme. This chain is Ribonuclease P protein component, found in Trichormus variabilis (strain ATCC 29413 / PCC 7937) (Anabaena variabilis).